The chain runs to 725 residues: ATP-dependent DNA helicase II subunit 2 (725 aa).

In terms of domain architecture, Ku spans 232–478 (LTLGDPQKYP…QQAMSDYVDA (247 aa)).

Belongs to the ku80 family. As to quaternary structure, heterodimer of mus-51/ku70 and mus-52/ku80.

It localises to the nucleus. The protein localises to the chromosome. It is found in the telomere. It carries out the reaction ATP + H2O = ADP + phosphate + H(+). Single-stranded DNA-dependent ATP-dependent helicase. Involved in non-homologous end joining (NHEJ) DNA double strand break repair. DNA-binding is sequence-independent but has a high affinity to nicks in double-stranded DNA and to the ends of duplex DNA. Binds to naturally occurring chromosomal ends, and therefore provides chromosomal end protection. Required also for telomere recombination to repair telomeric ends in the absence of telomerase. ku70, of the ku70/ku80 heterodimer, binds to the stem loop of tlc1, the RNA component of telomerase. Involved in telomere maintenance. Interacts with telomeric repeats and subtelomeric sequences thereby controlling telomere length and protecting against subtelomeric rearrangement. Maintains telomeric chromatin, which is involved in silencing the expression of genes located at the telomere. Required for mating-type switching. This Neurospora crassa (strain ATCC 24698 / 74-OR23-1A / CBS 708.71 / DSM 1257 / FGSC 987) protein is ATP-dependent DNA helicase II subunit 2 (mus-52).